Here is an 821-residue protein sequence, read N- to C-terminus: Putative outer membrane usher protein YqiG (821 aa).

The first 20 residues, 1–20 (MSGNIGANPVIIIGCASAYA), serve as a signal peptide directing secretion. C798 and C817 form a disulfide bridge.

Belongs to the fimbrial export usher family.

It is found in the cell outer membrane. In terms of biological role, may be involved in H(2) production during fermentative growth. Involved in the export and assembly of a fimbrial subunit across the outer membrane. The protein is Putative outer membrane usher protein YqiG (yqiG) of Escherichia coli (strain K12).